Consider the following 429-residue polypeptide: Glutamyl-tRNA reductase (429 aa).

Residues 49–52 (TCNR), serine 108, 113–115 (EAQ), and glutamine 119 contribute to the substrate site. Cysteine 50 functions as the Nucleophile in the catalytic mechanism. Residue 188 to 193 (GAGEMS) coordinates NADP(+).

It belongs to the glutamyl-tRNA reductase family. In terms of assembly, homodimer.

It catalyses the reaction (S)-4-amino-5-oxopentanoate + tRNA(Glu) + NADP(+) = L-glutamyl-tRNA(Glu) + NADPH + H(+). It participates in porphyrin-containing compound metabolism; protoporphyrin-IX biosynthesis; 5-aminolevulinate from L-glutamyl-tRNA(Glu): step 1/2. Catalyzes the NADPH-dependent reduction of glutamyl-tRNA(Glu) to glutamate 1-semialdehyde (GSA). This chain is Glutamyl-tRNA reductase, found in Rubrobacter xylanophilus (strain DSM 9941 / JCM 11954 / NBRC 16129 / PRD-1).